Consider the following 452-residue polypeptide: Phosphatidylinositol N-acetylglucosaminyltransferase GPI3 subunit (452 aa).

A helical transmembrane segment spans residues 407-427 (LYLLCGIVEYMLFFLLEWLYP).

It belongs to the glycosyltransferase group 1 family. In terms of assembly, component of the phosphatidylinositol N-acetylglucosaminyltransferase complex composed of at least GPI1, GPI2, GPI3, GPI15, GPI19 and ERI1.

The protein resides in the endoplasmic reticulum membrane. It catalyses the reaction a 1,2-diacyl-sn-glycero-3-phospho-(1D-myo-inositol) + UDP-N-acetyl-alpha-D-glucosamine = a 6-(N-acetyl-alpha-D-glucosaminyl)-1-(1,2-diacyl-sn-glycero-3-phospho)-1D-myo-inositol + UDP + H(+). It participates in glycolipid biosynthesis; glycosylphosphatidylinositol-anchor biosynthesis. Inhibited by Ras, probably via the interaction between RAS2 and ERI1. Functionally, catalytic subunit in the complex catalyzing the transfer of N-acetylglucosamine from UDP-N-acetylglucosamine to phosphatidylinositol, the first step of GPI biosynthesis. This is Phosphatidylinositol N-acetylglucosaminyltransferase GPI3 subunit (SPT14) from Saccharomyces cerevisiae (strain YJM789) (Baker's yeast).